The primary structure comprises 530 residues: ATP synthase subunit alpha 3 (530 aa).

174–181 is a binding site for ATP; the sequence is GDRATGKT. Residues 507 to 522 show a composition bias toward low complexity; sequence TASATAPPDPPAASAA. Residues 507-530 form a disordered region; that stretch reads TASATAPPDPPAASAAELPQPDSP.

It belongs to the ATPase alpha/beta chains family. In terms of assembly, F-type ATPases have 2 components, CF(1) - the catalytic core - and CF(0) - the membrane proton channel. CF(1) has five subunits: alpha(3), beta(3), gamma(1), delta(1), epsilon(1). CF(0) has three main subunits: a(1), b(2) and c(9-12). The alpha and beta chains form an alternating ring which encloses part of the gamma chain. CF(1) is attached to CF(0) by a central stalk formed by the gamma and epsilon chains, while a peripheral stalk is formed by the delta and b chains.

It is found in the cell inner membrane. It carries out the reaction ATP + H2O + 4 H(+)(in) = ADP + phosphate + 5 H(+)(out). Functionally, produces ATP from ADP in the presence of a proton gradient across the membrane. The alpha chain is a regulatory subunit. The polypeptide is ATP synthase subunit alpha 3 (Paraburkholderia xenovorans (strain LB400)).